Here is a 441-residue protein sequence, read N- to C-terminus: Zinc finger protein ZIC 3 (441 aa).

A C2H2-type 1; atypical zinc finger spans residues 222 to 257 (LSCKWLEESTMNHPQKTCDRTFSSMHELVTHMTMEH). The C2H2-type 2; atypical zinc finger occupies 266–293 (HICYWEECPRGGKSFKAKYKLVNHIRVH). C2H2-type zinc fingers lie at residues 299 to 323 (FPCPFPGCGKIFARSENLKIHKRTH), 329 to 353 (FKCEFEGCDRRFANSSDRKKHMHVH), and 359 to 381 (YICKVCDKSYTHPSSLRKHMKVH). The tract at residues 375-441 (RKHMKVHESQ…LPPNFNEWYV (67 aa)) is disordered. Positions 383–399 (SQGSDSSPAASSGYESA) are enriched in low complexity. A compositionally biased stretch (polar residues) spans 406–429 (SANSEEPSKNSSATHQTNNNSHNT).

It belongs to the GLI C2H2-type zinc-finger protein family. First detected at early gastrula (stage 10.25) in the dorsal lip and prospective neural plate. Also expressed in the mesoderm at early gastrulation, with expression strongest on the dorsal side. Mesodermal expression continues at stage 12 but is hardly detectable after stage 14. As gastrulation proceeds, expression decreases in the dorsal lip and increases in the prospective neural plate. At the neural plate stage (stage 14), expressed strongly in the prospective mesencephalon and anterior rhombencephalon, after which expression becomes stronger in the anterior neural folds. At early tailbud stage (stage 20), expression becomes restricted to the dorsal region of forebrain, midbrain and hindbrain, and weakly to the dorsal trunk. After mid-tailbud stage, expression decreases in the diencephalon, appears in the lateral mesoderm of the tailbud region and becomes restricted in the dorsal part of the neural tube.

It localises to the nucleus. Its subcellular location is the cytoplasm. In terms of biological role, probably acts as a transcriptional activator. May bind to the minimal GLI-consensus sequence 5'-GGGTGGTC-3'. Can determine the ectodermal cell fate and promote the earliest step of neural and neural crest development. Involved in establishing left-right asymmetry in the embryo. This is Zinc finger protein ZIC 3 (zic3) from Xenopus laevis (African clawed frog).